Here is a 293-residue protein sequence, read N- to C-terminus: Protease HtpX (293 aa).

Transmembrane regions (helical) follow at residues 4 to 24 and 33 to 53; these read ISLFLLTNLAVMVVFGIVLSL and AGLMIMAGLFGFGGAFVSLLM. Histidine 139 contributes to the Zn(2+) binding site. The active site involves glutamate 140. Histidine 143 provides a ligand contact to Zn(2+). 2 helical membrane passes run 158–178 and 193–213; these read VVNTFVIFISRILAQLAAGFM and LVYFAVSMVLELVFGVLASII. Residue glutamate 222 coordinates Zn(2+).

Belongs to the peptidase M48B family. Zn(2+) is required as a cofactor.

It is found in the cell inner membrane. This chain is Protease HtpX, found in Sodalis glossinidius (strain morsitans).